A 181-amino-acid chain; its full sequence is Protein GrpE (181 aa).

Residues 1–20 (MENTQENPASQSAEENGSET) are compositionally biased toward polar residues. Residues 1 to 39 (MENTQENPASQSAEENGSETQAAQDAAPAAEAADAALAE) form a disordered region. The segment covering 21-39 (QAAQDAAPAAEAADAALAE) has biased composition (low complexity).

It belongs to the GrpE family. As to quaternary structure, homodimer.

It localises to the cytoplasm. Its function is as follows. Participates actively in the response to hyperosmotic and heat shock by preventing the aggregation of stress-denatured proteins, in association with DnaK and GrpE. It is the nucleotide exchange factor for DnaK and may function as a thermosensor. Unfolded proteins bind initially to DnaJ; upon interaction with the DnaJ-bound protein, DnaK hydrolyzes its bound ATP, resulting in the formation of a stable complex. GrpE releases ADP from DnaK; ATP binding to DnaK triggers the release of the substrate protein, thus completing the reaction cycle. Several rounds of ATP-dependent interactions between DnaJ, DnaK and GrpE are required for fully efficient folding. The polypeptide is Protein GrpE (Burkholderia multivorans (strain ATCC 17616 / 249)).